An 89-amino-acid polypeptide reads, in one-letter code: Phosphocarrier protein HPr (89 aa).

The region spanning 1-88 is the HPr domain; it reads MLKQSIEIIN…DLINGYFGEG (88 aa). Catalysis depends on His15, which acts as the Pros-phosphohistidine intermediate. At Ser46 the chain carries Phosphoserine; by HPrK/P.

Belongs to the HPr family.

The protein localises to the cytoplasm. Its activity is regulated as follows. Phosphorylation on Ser-46 inhibits the phosphoryl transfer from enzyme I to HPr. General (non sugar-specific) component of the phosphoenolpyruvate-dependent sugar phosphotransferase system (sugar PTS). This major carbohydrate active-transport system catalyzes the phosphorylation of incoming sugar substrates concomitantly with their translocation across the cell membrane. The phosphoryl group from phosphoenolpyruvate (PEP) is transferred to the phosphoryl carrier protein HPr by enzyme I. Phospho-HPr then transfers it to the PTS EIIA domain. The protein is Phosphocarrier protein HPr (ptsH) of Neisseria meningitidis serogroup A / serotype 4A (strain DSM 15465 / Z2491).